A 183-amino-acid polypeptide reads, in one-letter code: Large ribosomal subunit protein uL6 (183 aa).

The protein belongs to the universal ribosomal protein uL6 family. Part of the 50S ribosomal subunit.

Functionally, this protein binds to the 23S rRNA, and is important in its secondary structure. It is located near the subunit interface in the base of the L7/L12 stalk, and near the tRNA binding site of the peptidyltransferase center. This is Large ribosomal subunit protein uL6 from Ruminiclostridium cellulolyticum (strain ATCC 35319 / DSM 5812 / JCM 6584 / H10) (Clostridium cellulolyticum).